The primary structure comprises 72 residues: Large ribosomal subunit protein bL31 (72 aa).

Cysteine 16, cysteine 18, cysteine 37, and cysteine 40 together coordinate Zn(2+).

Belongs to the bacterial ribosomal protein bL31 family. Type A subfamily. Part of the 50S ribosomal subunit. It depends on Zn(2+) as a cofactor.

Its function is as follows. Binds the 23S rRNA. The chain is Large ribosomal subunit protein bL31 from Buchnera aphidicola subsp. Acyrthosiphon pisum (strain APS) (Acyrthosiphon pisum symbiotic bacterium).